A 475-amino-acid polypeptide reads, in one-letter code: Ribulose bisphosphate carboxylase large chain (475 aa).

A propeptide spanning residues Met1–Ser2 is cleaved from the precursor. Pro3 is subject to N-acetylproline. Lys14 carries the post-translational modification N6,N6,N6-trimethyllysine. Residues Asn123 and Thr173 each contribute to the substrate site. The active-site Proton acceptor is Lys175. Residue Lys177 coordinates substrate. The Mg(2+) site is built by Lys201, Asp203, and Glu204. Lys201 is subject to N6-carboxylysine. His294 (proton acceptor) is an active-site residue. The substrate site is built by Arg295, His327, and Ser379.

The protein belongs to the RuBisCO large chain family. Type I subfamily. Heterohexadecamer of 8 large chains and 8 small chains; disulfide-linked. The disulfide link is formed within the large subunit homodimers. Mg(2+) serves as cofactor. The disulfide bond which can form in the large chain dimeric partners within the hexadecamer appears to be associated with oxidative stress and protein turnover.

Its subcellular location is the plastid. The protein resides in the chloroplast. It catalyses the reaction 2 (2R)-3-phosphoglycerate + 2 H(+) = D-ribulose 1,5-bisphosphate + CO2 + H2O. The enzyme catalyses D-ribulose 1,5-bisphosphate + O2 = 2-phosphoglycolate + (2R)-3-phosphoglycerate + 2 H(+). Functionally, ruBisCO catalyzes two reactions: the carboxylation of D-ribulose 1,5-bisphosphate, the primary event in carbon dioxide fixation, as well as the oxidative fragmentation of the pentose substrate in the photorespiration process. Both reactions occur simultaneously and in competition at the same active site. The chain is Ribulose bisphosphate carboxylase large chain from Amborella trichopoda.